Reading from the N-terminus, the 111-residue chain is Putative splicing factor C222.18 (111 aa).

An RRM domain is found at 18–95; that stretch reads HTLYIRNFGT…DIIFVEWAKS (78 aa).

This sequence belongs to the splicing factor SR family.

It is found in the nucleus. Has a role in pre-mRNA splicing where it is involved in spliceosome assembly. The polypeptide is Putative splicing factor C222.18 (Schizosaccharomyces pombe (strain 972 / ATCC 24843) (Fission yeast)).